The sequence spans 405 residues: Argininosuccinate synthase (405 aa).

Residues A10 to S18 and A37 contribute to the ATP site. 2 residues coordinate L-citrulline: Y88 and S93. Position 118 (G118) interacts with ATP. T120, N124, and D125 together coordinate L-aspartate. Residue N124 coordinates L-citrulline. The L-citrulline site is built by R128, S179, S188, E264, and Y276.

Belongs to the argininosuccinate synthase family. Type 1 subfamily. As to quaternary structure, homotetramer.

The protein resides in the cytoplasm. It catalyses the reaction L-citrulline + L-aspartate + ATP = 2-(N(omega)-L-arginino)succinate + AMP + diphosphate + H(+). The protein operates within amino-acid biosynthesis; L-arginine biosynthesis; L-arginine from L-ornithine and carbamoyl phosphate: step 2/3. This chain is Argininosuccinate synthase, found in Ectopseudomonas mendocina (strain ymp) (Pseudomonas mendocina).